A 325-amino-acid polypeptide reads, in one-letter code: 6-phosphogluconolactonase 3, chloroplastic (325 aa).

The transit peptide at 1-68 (MASSSCFLRS…KSSDTRRKVK (68 aa)) directs the protein to the chloroplast. The segment at 51-73 (SIGTGSTKKSSDTRRKVKSMATT) is disordered. The short motif at 323 to 325 (SKL) is the Microbody targeting signal element.

Belongs to the glucosamine/galactosamine-6-phosphate isomerase family. 6-phosphogluconolactonase subfamily. Interacts with TRXM2. In terms of tissue distribution, expressed in roots, leaves and shoots.

The protein resides in the plastid. The protein localises to the chloroplast. Its subcellular location is the peroxisome. It carries out the reaction 6-phospho-D-glucono-1,5-lactone + H2O = 6-phospho-D-gluconate + H(+). Its pathway is carbohydrate degradation; pentose phosphate pathway; D-ribulose 5-phosphate from D-glucose 6-phosphate (oxidative stage): step 2/3. Functionally, catalyzes the hydrolysis of 6-phosphogluconolactone to 6-phosphogluconate. Involved in the regulation of cellular redox state; enzymatic activity is required for this function. Required for sugar-dependent expression of nitrate assimilation genes in the nucleus of root cells. This is 6-phosphogluconolactonase 3, chloroplastic from Arabidopsis thaliana (Mouse-ear cress).